The chain runs to 397 residues: Tryptophan synthase beta chain (397 aa).

At lysine 91 the chain carries N6-(pyridoxal phosphate)lysine.

This sequence belongs to the TrpB family. Tetramer of two alpha and two beta chains. Requires pyridoxal 5'-phosphate as cofactor.

It catalyses the reaction (1S,2R)-1-C-(indol-3-yl)glycerol 3-phosphate + L-serine = D-glyceraldehyde 3-phosphate + L-tryptophan + H2O. Its pathway is amino-acid biosynthesis; L-tryptophan biosynthesis; L-tryptophan from chorismate: step 5/5. The beta subunit is responsible for the synthesis of L-tryptophan from indole and L-serine. This chain is Tryptophan synthase beta chain, found in Bacillus cereus (strain G9842).